We begin with the raw amino-acid sequence, 97 residues long: Exodeoxyribonuclease 7 small subunit (97 aa).

The segment at 1-21 is disordered; sequence MAKTATPGACASDPGSGPLPE.

Belongs to the XseB family. As to quaternary structure, heterooligomer composed of large and small subunits.

Its subcellular location is the cytoplasm. The catalysed reaction is Exonucleolytic cleavage in either 5'- to 3'- or 3'- to 5'-direction to yield nucleoside 5'-phosphates.. Its function is as follows. Bidirectionally degrades single-stranded DNA into large acid-insoluble oligonucleotides, which are then degraded further into small acid-soluble oligonucleotides. The polypeptide is Exodeoxyribonuclease 7 small subunit (Burkholderia mallei (strain NCTC 10247)).